Reading from the N-terminus, the 321-residue chain is tRNA dimethylallyltransferase (321 aa).

ATP is bound at residue 24–31; it reads GPTASGKS. 26–31 lines the substrate pocket; sequence TASGKS. Interaction with substrate tRNA stretches follow at residues 49–52 and 172–176; these read DSMQ and QRIVR.

It belongs to the IPP transferase family. In terms of assembly, monomer. The cofactor is Mg(2+).

It carries out the reaction adenosine(37) in tRNA + dimethylallyl diphosphate = N(6)-dimethylallyladenosine(37) in tRNA + diphosphate. In terms of biological role, catalyzes the transfer of a dimethylallyl group onto the adenine at position 37 in tRNAs that read codons beginning with uridine, leading to the formation of N6-(dimethylallyl)adenosine (i(6)A). The chain is tRNA dimethylallyltransferase from Mesorhizobium japonicum (strain LMG 29417 / CECT 9101 / MAFF 303099) (Mesorhizobium loti (strain MAFF 303099)).